The chain runs to 303 residues: Polyisoprenyl-teichoic acid--peptidoglycan teichoic acid transferase TagU (303 aa).

The Cytoplasmic portion of the chain corresponds to methionine 1–lysine 6. Residues isoleucine 7–alanine 27 form a helical; Signal-anchor for type II membrane protein membrane-spanning segment. The Extracellular segment spans residues lysine 28–lysine 303.

It belongs to the LytR/CpsA/Psr (LCP) family.

The protein resides in the cell membrane. Its pathway is cell wall biogenesis. Functionally, may catalyze the final step in cell wall teichoic acid biosynthesis, the transfer of the anionic cell wall polymers (APs) from their lipid-linked precursor to the cell wall peptidoglycan (PG). This Enterococcus faecalis (strain ATCC 700802 / V583) protein is Polyisoprenyl-teichoic acid--peptidoglycan teichoic acid transferase TagU.